We begin with the raw amino-acid sequence, 221 residues long: Orotidine 5'-phosphate decarboxylase (221 aa).

Substrate-binding positions include aspartate 12, lysine 34, 60–69, serine 117, 170–180, glycine 193, and arginine 194; these read DFKVADIPNT and PGVGAQGGKAS. The active-site Proton donor is lysine 62.

It belongs to the OMP decarboxylase family. Type 1 subfamily. Homodimer.

The enzyme catalyses orotidine 5'-phosphate + H(+) = UMP + CO2. It participates in pyrimidine metabolism; UMP biosynthesis via de novo pathway; UMP from orotate: step 2/2. In terms of biological role, catalyzes the decarboxylation of orotidine 5'-monophosphate (OMP) to uridine 5'-monophosphate (UMP). The sequence is that of Orotidine 5'-phosphate decarboxylase from Methanosarcina acetivorans (strain ATCC 35395 / DSM 2834 / JCM 12185 / C2A).